The chain runs to 153 residues: L-alanine exporter AlaE (153 aa).

4 helical membrane-spanning segments follow: residues 16–36 (VAMV…LSEM), 42–62 (LSSR…YGLY), 86–106 (LFAY…AIGA), and 114–134 (AVGS…YFLE).

The protein belongs to the AlaE exporter family.

The protein localises to the cell inner membrane. Exports L-alanine. The sequence is that of L-alanine exporter AlaE from Musicola paradisiaca (strain Ech703) (Dickeya paradisiaca).